Here is a 285-residue protein sequence, read N- to C-terminus: MDDVNTKTAAWADKRWQALLALDFSSRAGRTTLIGKRHQGPLVVQKMLYPEGDEVCHGIIIHPPGGVAGGDQLQLQATLEASARALLTTPGAGKWYKANQLSASQAVRFHLAANSCLEWLPQENILFDGSNVHFSSEIDLAEGAVFCGWDILCFGRQARGERWSEGELRQVMQVRREGRLIWNERLFAQPDSLVMRSGIGLKGMPVNGSLVVAAGTVPVEIIEACRAIEARGDAHYGVTALPEILSARYIGASSEAAKEYFERLWQVLRPWYAARPATRPRIWNT.

The protein belongs to the UreD family. As to quaternary structure, ureD, UreF and UreG form a complex that acts as a GTP-hydrolysis-dependent molecular chaperone, activating the urease apoprotein by helping to assemble the nickel containing metallocenter of UreC. The UreE protein probably delivers the nickel.

It is found in the cytoplasm. Required for maturation of urease via the functional incorporation of the urease nickel metallocenter. In Methylobacillus flagellatus (strain ATCC 51484 / DSM 6875 / VKM B-1610 / KT), this protein is Urease accessory protein UreD.